Here is a 416-residue protein sequence, read N- to C-terminus: Basic salivary proline-rich protein 2 (416 aa).

The first 16 residues, 1 to 16 (MLLILLSVALLALSSA), serve as a signal peptide directing secretion. Glutamine 17 carries the post-translational modification Pyrrolidone carboxylic acid. Residues 19–28 (LNEDVSQEES) are compositionally biased toward polar residues. Residues 19-416 (LNEDVSQEES…QGGRPSRPPQ (398 aa)) form a disordered region. Serine 24 bears the Phosphoserine mark. The segment covering 34–47 (GNPQGAPPQGGNKP) has biased composition (low complexity). Pro residues-rich tracts occupy residues 48–104 (QGPP…PPPQ) and 112–165 (RSPP…PPPQ). A Phosphoserine modification is found at serine 52. A run of 15 repeats spans residues 53-72 (PPGK…QGPP), 74-93 (PPGK…QGPP), 94-113 (PPGK…SPRS), 114-133 (PPGK…QGPP), 135-154 (PPGK…QGPP), 155-174 (PPGK…RSSR), 176-195 (PPGK…QGPP), 197-216 (PPGK…QGPP), 217-236 (PPGK…QSAR), 238-257 (PPGK…QGPP), 259-278 (PPGK…QGPP), 279-298 (PPGK…RSSR), 300-319 (PPGK…QGPP), 321-340 (PPGK…QGPP), and 341-360 (PPGK…RSAR). Residues 53–360 (PPGKPQGPPP…QGGSKSRSAR (308 aa)) are 15 X 20 AA approximate tandem repeats of P-P-G-K-P-Q-G-P-P-P-Q-G-[GD]-[NKS]-[KSQ]-[PRS]-[QRS] [GPS]-[PSAR]-[PSR]. Residue asparagine 168 is glycosylated (N-linked (GlcNAc...) asparagine). Over residues 177-227 (PGKPQGPPPQGGNQPQGPPPPPGKPQGPPPQGGNKPQGPPPPGKPQGPPPQ) the composition is skewed to pro residues. An N-linked (GlcNAc...) asparagine glycan is attached at asparagine 230. An O-linked (Hex) serine glycan is attached at serine 232. Pro residues predominate over residues 239–289 (PGKPQGPPPQGGNQPQGPPPPPGKPQGPPPQGGNKPQGPPPPGKPQGPPPQ). The N-linked (GlcNAc...) asparagine glycan is linked to asparagine 272. Over residues 290-300 (GGSKSRSSRSP) the composition is skewed to low complexity. Composition is skewed to pro residues over residues 301–351 (PGKP…PPPQ) and 378–416 (QGPP…RPPQ).

In terms of processing, N- and O-glycosylated. In head and neck cancer patients, O-glycosylated with glucosylgalactosyl carbohydrate moiety. This modification would require prior hydroxylation on the lysine residue. Proteolytically cleaved at the tripeptide Xaa-Pro-Gln, where Xaa in the P(3) position is mostly lysine. The endoprotease may be of microbial origin. Post-translationally, pyroglutamate formation occurs on terminal Gln residues of cleaved peptides. Pyroglutamate formation found on at least Gln-398 and Gln-400.

The protein resides in the secreted. This chain is Basic salivary proline-rich protein 2 (PRB2), found in Homo sapiens (Human).